The chain runs to 533 residues: Dipeptide-binding protein (533 aa).

The N-terminal stretch at 1 to 24 (MRKILPLRAWLAAGLILGSPFSHA) is a signal peptide.

Belongs to the bacterial solute-binding protein 5 family.

The protein resides in the periplasm. Functionally, binds different dipeptides. Probably bind only L-amino acid containing dipeptides. The polypeptide is Dipeptide-binding protein (Pseudomonas aeruginosa (strain ATCC 15692 / DSM 22644 / CIP 104116 / JCM 14847 / LMG 12228 / 1C / PRS 101 / PAO1)).